Reading from the N-terminus, the 301-residue chain is Probable alpha-L-glutamate ligase (301 aa).

One can recognise an ATP-grasp domain in the interval 104 to 287 (LQLLSRRGIG…VAGIIIEHIE (184 aa)). ATP is bound by residues Lys141, 178–179 (EY), Asp187, and 211–213 (RSN). Residues Asp248, Glu260, and Asn262 each contribute to the Mg(2+) site. The Mn(2+) site is built by Asp248, Glu260, and Asn262.

The protein belongs to the RimK family. Requires Mg(2+) as cofactor. It depends on Mn(2+) as a cofactor.

In Pseudomonas fluorescens (strain ATCC BAA-477 / NRRL B-23932 / Pf-5), this protein is Probable alpha-L-glutamate ligase.